We begin with the raw amino-acid sequence, 970 residues long: MTSRIQPKSGGYLLSKSDFTKVFEDVPKIAITSSVDLRNKFDNVKTILSNTSEDWNKRQTQLKTIRSLIINGEKLVDRPTMIAHILQLLGCFELAVKDLRSQILREAAITCSFIVSKYGIETHSIGEDILIPAMGQVAVSTKIMATSASTLTEFIVEYIQTRQVFTILSSFSTSKDKNQRRQLAVLLEIIIGKWSDRLKKQIIRQICELVKSAINDADSETRAAGRRAFAKLEEFHSEEADALFLELENSKQKMLRGGDAASSWASINSDKGSIPIRSKLSAGAKGYSNISAKFLAQRSASAIDPKALKVTGPSRLARPLSTKAMVRQDTSPAGSKIPYPNRPGSRTRTSSITSNDSRDTSPTRRHSPLPPDTQKARVKYGNGSFFAKLGMSDNTDDDEFLLPIRVRSPQKPNLGDSPADNVSRVLKECCSSSVTEKKDGIKKLLPIVSDTTLSSTEIKNIGNCLNRLLSDASNTKLILQMVLEVYAVFIRTHSSRLSEWLRLALAKLFARKATETLPNTKKQINHTLNVILECFNAHHQLVTVCELMCDPIHLMVPKARVALLEYMTSLLDEYTEPGASINHKELKAALRKMFTWIGDQRQSILLTPYIEKAICSMFCVNVADFSALISEFDSDQKAWLHQTLQLNGLENGISSGSGGSGNNHPKATPLRETPHKNDSVVLPEFGSAQKRTAINLGSFNTSTNAALSKLEEQSTSRLMEKMNLNSTVTLPPDTLEKIQNVQDLLHKMRVSKDPDEQENAISQVYMKICDGGFGIWEQCYAKLLLNLFEILSTSRSENNKKMCLRILGKMCTAQAAKLFDSTEMAVCKVLDAAVNTNDATTALAVDDCLRTLATHLPLANIINIAKVILIQEPIDDERASLVLKMVTRLFEELPADELKNVVDDITPCVIKAYQSTSSSVRKTVVYCLVAMVNRVGEQRMAPHFTKLPKAMTNLIQVYVNRAISTSLPRL.

Disordered stretches follow at residues 314 to 377 (SRLA…QKAR) and 651 to 675 (NGISSGSGGSGNNHPKATPLRETPH). Residues 344–355 (GSRTRTSSITSN) show a composition bias toward polar residues. The HEAT repeat unit spans residues 905-943 (ITPCVIKAYQSTSSSVRKTVVYCLVAMVNRVGEQRMAPH).

It belongs to the CLASP family.

It localises to the cytoplasm. Its subcellular location is the cytoskeleton. Microtubule plus-end tracking protein that promotes the stabilization of dynamic microtubules. The protein is Protein CLASP-3 (cls-3) of Caenorhabditis briggsae.